A 155-amino-acid polypeptide reads, in one-letter code: Troponin C, isoform 2 (155 aa).

EF-hand domains are found at residues 11–46, 47–82, 87–122, and 123–155; these read EQIA…MGQP, FDRQ…FIVE, AMQK…LDDQ, and LTEQ…MTGE. Residues D60, D62, S64, R66, and E71 each contribute to the Ca(2+) site. Ca(2+) is bound by residues D136, D138, S140, T142, and E147.

This sequence belongs to the troponin C family. As to expression, accumulates almost exclusively in larval muscles.

The sequence is that of Troponin C, isoform 2 (TpnC47D) from Drosophila melanogaster (Fruit fly).